The sequence spans 389 residues: Probable zinc transporter zip2 (389 aa).

Transmembrane regions (helical) follow at residues 6 to 26 (GWIL…GIYL), 48 to 68 (LVTG…ASVM), 88 to 108 (VFQF…NHFL), 267 to 289 (VLVA…LYLA), 305 to 325 (SCSL…GGIG), 329 to 349 (FLNF…LILS), and 368 to 388 (HSFI…IFDS).

The protein belongs to the ZIP transporter (TC 2.A.5) family.

It localises to the endoplasmic reticulum membrane. Functionally, probable zinc transporter that may mediate zinc remobilization from the endoplasmic reticulum under zinc limitation. In Schizosaccharomyces pombe (strain 972 / ATCC 24843) (Fission yeast), this protein is Probable zinc transporter zip2 (zip2).